We begin with the raw amino-acid sequence, 347 residues long: Probable arabinogalactan endo-beta-1,4-galactanase A (347 aa).

A signal peptide spans 1 to 16 (MLFSYLLATLPLLANA). The Proton donor role is filled by E150. The Nucleophile role is filled by E260.

The protein belongs to the glycosyl hydrolase 53 family.

The protein resides in the secreted. It carries out the reaction The enzyme specifically hydrolyzes (1-&gt;4)-beta-D-galactosidic linkages in type I arabinogalactans.. Endogalactanase involved in the degradation of plant cell wall polysaccharides, and more particularly of hairy regions of pectin. The protein is Probable arabinogalactan endo-beta-1,4-galactanase A (galA) of Aspergillus oryzae (strain ATCC 42149 / RIB 40) (Yellow koji mold).